Reading from the N-terminus, the 520-residue chain is EGF domain-specific O-linked N-acetylglucosamine transferase (520 aa).

The first 16 residues, Met1–Ala16, serve as a signal peptide directing secretion. Asn52, Asn176, and Asn250 each carry an N-linked (GlcNAc...) asparagine glycan. A Required for optimal activity motif is present at residues Asp292–Glu294. N-linked (GlcNAc...) asparagine glycosylation is present at Asn479. Positions Arg517–Leu520 match the Prevents secretion from ER motif.

It depends on a divalent metal cation as a cofactor.

The protein localises to the endoplasmic reticulum lumen. It carries out the reaction L-seryl-[protein] + UDP-N-acetyl-alpha-D-glucosamine = 3-O-(N-acetyl-beta-D-glucosaminyl)-L-seryl-[protein] + UDP + H(+). The catalysed reaction is L-threonyl-[protein] + UDP-N-acetyl-alpha-D-glucosamine = 3-O-(N-acetyl-beta-D-glucosaminyl)-L-threonyl-[protein] + UDP + H(+). In terms of biological role, catalyzes the transfer of a single N-acetylglucosamine from UDP-GlcNAc to a serine or threonine residue in extracellular proteins resulting in their modification with a beta-linked N-acetylglucosamine (O-GlcNAc). Specifically glycosylates the Thr residue located between the fifth and sixth conserved cysteines of folded EGF-like domains. Involved in epithelial cell adhesion/interaction with the extracellular matrix by mediating glycosylation of proteins in the secretory pathway, such as Dumpy (Dp). This chain is EGF domain-specific O-linked N-acetylglucosamine transferase (Eogt), found in Drosophila melanogaster (Fruit fly).